We begin with the raw amino-acid sequence, 382 residues long: Mannitol-1-phosphate 5-dehydrogenase (382 aa).

Residue 3 to 14 coordinates NAD(+); that stretch reads ALHFGAGNIGRG.

It belongs to the mannitol dehydrogenase family.

It carries out the reaction D-mannitol 1-phosphate + NAD(+) = beta-D-fructose 6-phosphate + NADH + H(+). This chain is Mannitol-1-phosphate 5-dehydrogenase, found in Salmonella enteritidis PT4 (strain P125109).